The primary structure comprises 842 residues: Alanine--tRNA ligase (842 aa).

4 residues coordinate Zn(2+): histidine 549, histidine 553, cysteine 650, and histidine 654.

It belongs to the class-II aminoacyl-tRNA synthetase family. Zn(2+) serves as cofactor.

The protein localises to the cytoplasm. The enzyme catalyses tRNA(Ala) + L-alanine + ATP = L-alanyl-tRNA(Ala) + AMP + diphosphate. Catalyzes the attachment of alanine to tRNA(Ala) in a two-step reaction: alanine is first activated by ATP to form Ala-AMP and then transferred to the acceptor end of tRNA(Ala). Also edits incorrectly charged Ser-tRNA(Ala) and Gly-tRNA(Ala) via its editing domain. The chain is Alanine--tRNA ligase from Campylobacter jejuni subsp. jejuni serotype O:23/36 (strain 81-176).